The sequence spans 249 residues: 2,3-bisphosphoglycerate-dependent phosphoglycerate mutase (249 aa).

Residues 9-16 (RHGQSQWN), 22-23 (TG), R61, 88-91 (ERHY), K99, 115-116 (RR), and 184-185 (GN) contribute to the substrate site. H10 functions as the Tele-phosphohistidine intermediate in the catalytic mechanism. Residue E88 is the Proton donor/acceptor of the active site.

This sequence belongs to the phosphoglycerate mutase family. BPG-dependent PGAM subfamily. Homodimer.

The enzyme catalyses (2R)-2-phosphoglycerate = (2R)-3-phosphoglycerate. It functions in the pathway carbohydrate degradation; glycolysis; pyruvate from D-glyceraldehyde 3-phosphate: step 3/5. Functionally, catalyzes the interconversion of 2-phosphoglycerate and 3-phosphoglycerate. The polypeptide is 2,3-bisphosphoglycerate-dependent phosphoglycerate mutase (Xanthomonas euvesicatoria pv. vesicatoria (strain 85-10) (Xanthomonas campestris pv. vesicatoria)).